Here is a 96-residue protein sequence, read N- to C-terminus: Co-chaperonin GroES (96 aa).

This sequence belongs to the GroES chaperonin family. As to quaternary structure, heptamer of 7 subunits arranged in a ring. Interacts with the chaperonin GroEL.

It localises to the cytoplasm. Functionally, together with the chaperonin GroEL, plays an essential role in assisting protein folding. The GroEL-GroES system forms a nano-cage that allows encapsulation of the non-native substrate proteins and provides a physical environment optimized to promote and accelerate protein folding. GroES binds to the apical surface of the GroEL ring, thereby capping the opening of the GroEL channel. This is Co-chaperonin GroES from Verminephrobacter eiseniae (strain EF01-2).